The sequence spans 324 residues: Melanoma-associated antigen B16 (324 aa).

Residues 1–15 (MSQDQESPRCTHDQH) are compositionally biased toward basic and acidic residues. Disordered regions lie at residues 1 to 22 (MSQD…FSET) and 39 to 108 (LSSS…PRNV). Residues 70 to 81 (SSSIAVTTTSSS) show a composition bias toward low complexity. Acidic residues predominate over residues 82–95 (ESDEASSNQEEEDS). Positions 113-312 (LDQKVAFLVN…HSFPSQYAEA (200 aa)) constitute an MAGE domain.

The protein is Melanoma-associated antigen B16 (MAGEB16) of Homo sapiens (Human).